A 366-amino-acid polypeptide reads, in one-letter code: Histidinol-phosphate aminotransferase (366 aa).

Residue K228 is modified to N6-(pyridoxal phosphate)lysine.

Belongs to the class-II pyridoxal-phosphate-dependent aminotransferase family. Histidinol-phosphate aminotransferase subfamily. Homodimer. Pyridoxal 5'-phosphate serves as cofactor.

The catalysed reaction is L-histidinol phosphate + 2-oxoglutarate = 3-(imidazol-4-yl)-2-oxopropyl phosphate + L-glutamate. The protein operates within amino-acid biosynthesis; L-histidine biosynthesis; L-histidine from 5-phospho-alpha-D-ribose 1-diphosphate: step 7/9. The sequence is that of Histidinol-phosphate aminotransferase from Corynebacterium glutamicum (strain R).